Here is a 389-residue protein sequence, read N- to C-terminus: Large envelope protein (389 aa).

Position 1 is an N-acetylmethionine (methionine 1). The N-myristoyl glycine; by host moiety is linked to residue glycine 2. Residues 2-108 (GQNLSTSNPL…PPLRNTHPQA (107 aa)) form a pre-S1 region. Residues 2 to 163 (GQNLSTSNPL…FSRIGDPALN (162 aa)) form a pre-S region. Residues 2–170 (GQNLSTSNPL…ALNMENITSG (169 aa)) lie on the Virion surface; in external conformation side of the membrane. Over 2-242 (GQNLSTSNPL…PGYRWMCLRR (241 aa)) the chain is Intravirion; in internal conformation. A disordered region spans residues 77–101 (LPANPPPASTNRQTGRQPTPLSPPL). The span at 85-95 (STNRQTGRQPT) shows a compositional bias: polar residues. A pre-S2 region spans residues 109–163 (MQWNSTTFHQTLQDPRVRGLYFPAGGSSSGTVNPVPTTASPISSIFSRIGDPALN). Residues 171 to 191 (LLGPLLVLQAGFFLLTRILTI) traverse the membrane as a helical segment. The Intravirion; in external conformation portion of the chain corresponds to 192 to 242 (PQSLDSWWTSLNFLGGTTVCLGQNSQSPTSNHSPTSCPPTCPGYRWMCLRR). A helical membrane pass occupies residues 243–263 (FIIFLFILLLCLIFLLVLLDY). The Virion surface portion of the chain corresponds to 264–337 (QGMLPVCPLI…WASARFSWLS (74 aa)). N-linked (GlcNAc...) asparagine; by host glycosylation is present at asparagine 309. Residues 338–358 (LLVPFVQWFVGLSPTVWLSVI) form a helical membrane-spanning segment. Topologically, residues 359 to 364 (WMMWYW) are intravirion. A helical membrane pass occupies residues 365–387 (GPSLYRILSPFLPLLPIFFCLWV). Residues 388–389 (YI) are Virion surface-facing.

The protein belongs to the orthohepadnavirus major surface antigen family. As to quaternary structure, in its internal form (Li-HBsAg), interacts with the capsid protein and with the isoform S. Interacts with host chaperone CANX. In terms of assembly, associates with host chaperone CANX through its pre-S2 N glycan; this association may be essential for isoform M proper secretion. Interacts with isoform L. Interacts with the antigens of satellite virus HDV (HDVAgs); this interaction is required for encapsidation of HDV genomic RNA. Post-translationally, isoform M is N-terminally acetylated by host at a ratio of 90%, and N-glycosylated by host at the pre-S2 region. In terms of processing, myristoylated.

The protein resides in the virion membrane. Functionally, the large envelope protein exists in two topological conformations, one which is termed 'external' or Le-HBsAg and the other 'internal' or Li-HBsAg. In its external conformation the protein attaches the virus to cell receptors and thereby initiating infection. This interaction determines the species specificity and liver tropism. This attachment induces virion internalization predominantly through caveolin-mediated endocytosis. The large envelope protein also assures fusion between virion membrane and endosomal membrane. In its internal conformation the protein plays a role in virion morphogenesis and mediates the contact with the nucleocapsid like a matrix protein. Its function is as follows. The middle envelope protein plays an important role in the budding of the virion. It is involved in the induction of budding in a nucleocapsid independent way. In this process the majority of envelope proteins bud to form subviral lipoprotein particles of 22 nm of diameter that do not contain a nucleocapsid. This chain is Large envelope protein, found in Hepatitis B virus genotype D (isolate Germany/1-91/1991) (HBV-D).